The following is a 152-amino-acid chain: Endoribonuclease YbeY (152 aa).

Zn(2+)-binding residues include His-118, His-122, and His-128.

The protein belongs to the endoribonuclease YbeY family. The cofactor is Zn(2+).

The protein resides in the cytoplasm. Its function is as follows. Single strand-specific metallo-endoribonuclease involved in late-stage 70S ribosome quality control and in maturation of the 3' terminus of the 16S rRNA. This chain is Endoribonuclease YbeY, found in Pelotomaculum thermopropionicum (strain DSM 13744 / JCM 10971 / SI).